We begin with the raw amino-acid sequence, 145 residues long: Large-conductance mechanosensitive channel (145 aa).

2 helical membrane-spanning segments follow: residues Val14–Leu34 and Gly81–Val101.

It belongs to the MscL family. In terms of assembly, homopentamer.

The protein localises to the cell inner membrane. Its function is as follows. Channel that opens in response to stretch forces in the membrane lipid bilayer. May participate in the regulation of osmotic pressure changes within the cell. The sequence is that of Large-conductance mechanosensitive channel from Pelobacter propionicus (strain DSM 2379 / NBRC 103807 / OttBd1).